The chain runs to 624 residues: Ceramide transfer protein (624 aa).

Positions 1-11 (MSDNQSWNSSG) are enriched in polar residues. Positions 1–24 (MSDNQSWNSSGSEEDPETESGPPV) are disordered. One can recognise a PH domain in the interval 23 to 117 (PVERCGVLSK…WIDAIEQHKT (95 aa)). A Phosphoserine modification is found at serine 126. Serine 132 carries the post-translational modification Phosphoserine; by PKD. Serine 135 is modified (phosphoserine). Positions 263–303 (IELMVKREDSWQKRLDKETEKKRRTEEAYKNAMTELKKKSH) form a coiled coil. Serine 315 bears the Phosphoserine mark. The short motif at 321–327 (EFFDAVE) is the FFAT element. Tyrosine 372 carries the phosphotyrosine modification. Residues serine 373, serine 377, and serine 380 each carry the phosphoserine modification. Residues 389–618 (DVHRFSSQVE…FTSYVQEKTA (230 aa)) form the START domain. The an N-acylsphing-4-enine site is built by glutamate 472, glutamine 493, asparagine 530, and tyrosine 579.

Interacts with VAPA and VAPB. Interaction with VAPB is less efficient than with VAPA. Interacts (via FFAT motif) with MOSPD2 (via MSP domain). In terms of processing, phosphorylation on Ser-132 decreases the affinity toward phosphatidylinositol 4-phosphate at Golgi membranes and reduces ceramide transfer activity. Inactivated by hyperphosphorylation of serine residues by CSNK1G2/CK1 that triggers dissociation from the Golgi complex, thus down-regulating ER-to-Golgi transport of ceramide and sphingomyelin synthesis. Widely expressed.

It is found in the cytoplasm. The protein resides in the golgi apparatus. It localises to the endoplasmic reticulum. It catalyses the reaction N-hexadecanoylsphing-4-enine(in) = N-hexadecanoylsphing-4-enine(out). Shelters ceramides and diacylglycerol lipids inside its START domain and mediates the intracellular trafficking of ceramides and diacylglycerol lipids in a non-vesicular manner. In Homo sapiens (Human), this protein is Ceramide transfer protein.